The chain runs to 117 residues: Probable non-functional immunoglobulinn kappa variable 1-37 (117 aa).

The N-terminal stretch at 1-22 (MDMRVPAQLLGLLLLWVPGARC) is a signal peptide. In terms of domain architecture, Ig-like spans 24-117 (IQLTQSPSSL…YYGQRTYNAP (94 aa)).

In terms of assembly, most probably, the immunoglobulin is not assembled due to incorrect folding of light chain. Immunoglobulins are composed of two identical heavy chains and two identical light chains; disulfide-linked.

The protein resides in the secreted. It localises to the cell membrane. In terms of biological role, probable non-functional open reading frame (ORF) of V region of the variable domain of immunoglobulin light chains. Non-functional ORF generally cannot participate in the synthesis of a productive immunoglobulin chain due to altered V-(D)-J or switch recombination and/or splicing site (at mRNA level) and/or conserved amino acid change (protein level). Immunoglobulins, also known as antibodies, are membrane-bound or secreted glycoproteins produced by B lymphocytes. In the recognition phase of humoral immunity, the membrane-bound immunoglobulins serve as receptors which, upon binding of a specific antigen, trigger the clonal expansion and differentiation of B lymphocytes into immunoglobulins-secreting plasma cells. Secreted immunoglobulins mediate the effector phase of humoral immunity, which results in the elimination of bound antigens. The antigen binding site is formed by the variable domain of one heavy chain, together with that of its associated light chain. Thus, each immunoglobulin has two antigen binding sites with remarkable affinity for a particular antigen. The variable domains are assembled by a process called V-(D)-J rearrangement and can then be subjected to somatic hypermutations which, after exposure to antigen and selection, allow affinity maturation for a particular antigen. In Homo sapiens (Human), this protein is Probable non-functional immunoglobulinn kappa variable 1-37.